A 133-amino-acid polypeptide reads, in one-letter code: Large ribosomal subunit protein bL17 (133 aa).

The protein belongs to the bacterial ribosomal protein bL17 family. As to quaternary structure, part of the 50S ribosomal subunit. Contacts protein L32.

The sequence is that of Large ribosomal subunit protein bL17 from Idiomarina loihiensis (strain ATCC BAA-735 / DSM 15497 / L2-TR).